Reading from the N-terminus, the 156-residue chain is Small ribosomal subunit protein uS7 (156 aa).

This sequence belongs to the universal ribosomal protein uS7 family. Part of the 30S ribosomal subunit. Contacts proteins S9 and S11.

In terms of biological role, one of the primary rRNA binding proteins, it binds directly to 16S rRNA where it nucleates assembly of the head domain of the 30S subunit. Is located at the subunit interface close to the decoding center, probably blocks exit of the E-site tRNA. The protein is Small ribosomal subunit protein uS7 of Cupriavidus necator (strain ATCC 17699 / DSM 428 / KCTC 22496 / NCIMB 10442 / H16 / Stanier 337) (Ralstonia eutropha).